Reading from the N-terminus, the 315-residue chain is Olfactory receptor 51L1 (315 aa).

Residues 1-27 (MGDWNNSDAVEPIFILRGFPGLEYVHS) lie on the Extracellular side of the membrane. N5 carries an N-linked (GlcNAc...) asparagine glycan. A helical membrane pass occupies residues 28–48 (WLSILFCLAYLVAFMGNVTIL). Residues 49–56 (SVIWIESS) are Cytoplasmic-facing. The helical transmembrane segment at 57 to 77 (LHQPMYYFISILAVNDLGMSL) threads the bilayer. Residues 78–101 (STLPTMLAVLWLDAPEIQASACYA) lie on the Extracellular side of the membrane. A disulfide bridge links C99 with C191. The helical transmembrane segment at 102–122 (QLFFIHTFTFLESSVLLAMAF) threads the bilayer. Residues 123-141 (DRFVAICHPLHYPTILTNS) lie on the Cytoplasmic side of the membrane. Residues 142–162 (VIGKIGLACLLRSLGVVLPTP) form a helical membrane-spanning segment. Residues 163-198 (LLLRHYHYCHGNALSHAFCLHQDVLRLSCTDARTNS) are Extracellular-facing. The helical transmembrane segment at 199-219 (IYGLCVVIATLGVDSIFILLS) threads the bilayer. Topologically, residues 220–239 (YVLILNTVLDIASREEQLKA) are cytoplasmic. The chain crosses the membrane as a helical span at residues 240-260 (LNTCVSHICVVLIFFVPVIGV). At 261 to 275 (SMVHRFGKHLSPIVH) the chain is on the extracellular side. The helical transmembrane segment at 276–296 (ILMADIYLLLPPVLNPIVYSV) threads the bilayer. The Cytoplasmic portion of the chain corresponds to 297-315 (RTKQIRLGILHKFVLRRRF).

It belongs to the G-protein coupled receptor 1 family.

The protein localises to the cell membrane. Odorant receptor. The polypeptide is Olfactory receptor 51L1 (OR51L1) (Homo sapiens (Human)).